Reading from the N-terminus, the 333-residue chain is Fructose-1,6-bisphosphatase class 1 1 (333 aa).

Residues E81, D100, L102, and D103 each coordinate Mg(2+). Substrate is bound by residues 103-106 and N191; that span reads DGSS. Residue E263 participates in Mg(2+) binding.

The protein belongs to the FBPase class 1 family. In terms of assembly, homotetramer. It depends on Mg(2+) as a cofactor.

Its subcellular location is the cytoplasm. It carries out the reaction beta-D-fructose 1,6-bisphosphate + H2O = beta-D-fructose 6-phosphate + phosphate. The protein operates within carbohydrate biosynthesis; Calvin cycle. The chain is Fructose-1,6-bisphosphatase class 1 1 from Cereibacter sphaeroides (strain ATCC 17025 / ATH 2.4.3) (Rhodobacter sphaeroides).